We begin with the raw amino-acid sequence, 571 residues long: PHD and RING finger domain-containing protein C126.07c (571 aa).

Residues cysteine 18–arginine 79 form an RING-type 1; atypical zinc finger. A PHD-type zinc finger spans residues threonine 122–leucine 170. Residues cysteine 125 to valine 168 form an RING-type 2; degenerate zinc finger. Residues alanine 305 to proline 324 are compositionally biased toward polar residues. Positions alanine 305–serine 377 are disordered. The segment covering arginine 346–isoleucine 356 has biased composition (basic residues). The span at serine 359–serine 377 shows a compositional bias: polar residues.

The protein resides in the cytoplasm. The protein localises to the nucleus. This is PHD and RING finger domain-containing protein C126.07c from Schizosaccharomyces pombe (strain 972 / ATCC 24843) (Fission yeast).